We begin with the raw amino-acid sequence, 584 residues long: A-type ATP synthase subunit A 2 (584 aa).

Residue 227 to 234 (GGFGTGKT) participates in ATP binding.

Belongs to the ATPase alpha/beta chains family. In terms of assembly, has multiple subunits with at least A(3), B(3), C, D, E, F, H, I and proteolipid K(x).

The protein localises to the cell membrane. The enzyme catalyses ATP + H2O + 4 H(+)(in) = ADP + phosphate + 5 H(+)(out). In terms of biological role, component of the A-type ATP synthase that produces ATP from ADP in the presence of a proton gradient across the membrane. The A chain is the catalytic subunit. The chain is A-type ATP synthase subunit A 2 from Methanospirillum hungatei JF-1 (strain ATCC 27890 / DSM 864 / NBRC 100397 / JF-1).